A 193-amino-acid chain; its full sequence is Holliday junction branch migration complex subunit RuvA (193 aa).

Residues 1 to 64 (MIGRIAGVLL…EDAHLLYGFL (64 aa)) are domain I. Positions 65-139 (TPQERSTFRE…GKLGADLGAM (75 aa)) are domain II. The segment at 139 to 143 (MAGAA) is flexible linker. A domain III region spans residues 144–193 (SQSDHASDILNALLALGYSEKEGLAAIKNVPAGTGVSEGIKLALKALSKA).

Belongs to the RuvA family. As to quaternary structure, homotetramer. Forms an RuvA(8)-RuvB(12)-Holliday junction (HJ) complex. HJ DNA is sandwiched between 2 RuvA tetramers; dsDNA enters through RuvA and exits via RuvB. An RuvB hexamer assembles on each DNA strand where it exits the tetramer. Each RuvB hexamer is contacted by two RuvA subunits (via domain III) on 2 adjacent RuvB subunits; this complex drives branch migration. In the full resolvosome a probable DNA-RuvA(4)-RuvB(12)-RuvC(2) complex forms which resolves the HJ.

The protein localises to the cytoplasm. The RuvA-RuvB-RuvC complex processes Holliday junction (HJ) DNA during genetic recombination and DNA repair, while the RuvA-RuvB complex plays an important role in the rescue of blocked DNA replication forks via replication fork reversal (RFR). RuvA specifically binds to HJ cruciform DNA, conferring on it an open structure. The RuvB hexamer acts as an ATP-dependent pump, pulling dsDNA into and through the RuvAB complex. HJ branch migration allows RuvC to scan DNA until it finds its consensus sequence, where it cleaves and resolves the cruciform DNA. This is Holliday junction branch migration complex subunit RuvA from Paraburkholderia phymatum (strain DSM 17167 / CIP 108236 / LMG 21445 / STM815) (Burkholderia phymatum).